We begin with the raw amino-acid sequence, 93 residues long: Small ribosomal subunit protein uS19 (93 aa).

The segment at 74–93 is disordered; the sequence is FSPTRTFRGHVKDDRKSKRR. The segment covering 83–93 has biased composition (basic and acidic residues); that stretch reads HVKDDRKSKRR.

The protein belongs to the universal ribosomal protein uS19 family.

Protein S19 forms a complex with S13 that binds strongly to the 16S ribosomal RNA. The chain is Small ribosomal subunit protein uS19 from Streptomyces griseus subsp. griseus (strain JCM 4626 / CBS 651.72 / NBRC 13350 / KCC S-0626 / ISP 5235).